Reading from the N-terminus, the 416-residue chain is UDP-N-acetylmuramoylalanine--D-glutamate ligase (416 aa).

Residue 104 to 110 (GSNGKST) participates in ATP binding.

This sequence belongs to the MurCDEF family.

It localises to the cytoplasm. It carries out the reaction UDP-N-acetyl-alpha-D-muramoyl-L-alanine + D-glutamate + ATP = UDP-N-acetyl-alpha-D-muramoyl-L-alanyl-D-glutamate + ADP + phosphate + H(+). Its pathway is cell wall biogenesis; peptidoglycan biosynthesis. Functionally, cell wall formation. Catalyzes the addition of glutamate to the nucleotide precursor UDP-N-acetylmuramoyl-L-alanine (UMA). This is UDP-N-acetylmuramoylalanine--D-glutamate ligase from Francisella tularensis subsp. holarctica (strain FTNF002-00 / FTA).